Here is an 827-residue protein sequence, read N- to C-terminus: Polyhomeotic-like protein 2 (827 aa).

Disordered regions lie at residues 1-78 (MEKE…QYLQ), 282-316 (GLGAEPSPQGTAAKASPAETSSETTAKNDKTSDLT), and 482-545 (QEPT…PPQA). Low complexity predominate over residues 9 to 38 (SVASSASVTIPSTTSVSTSTSAGTLSNSSS). Residues 485–498 (TRTELRQSDKESQV) show a composition bias toward basic and acidic residues. Positions 517–538 (AMTSGSGNNAPTVTGSAPQNGE) are enriched in polar residues. Residues 540–570 (KPPPQAVVKPQILTHVIEGFVIQEGAEPFPV) carry the HD1 motif. The FCS-type zinc-finger motif lies at 609–643 (NNQPEPVRTCEFCGNVDFAFNFKRSKRFCSTVCAK). Cys-618, Cys-621, Cys-637, and Cys-641 together coordinate Zn(2+). Residues 653-730 (MGLFPGKSSP…EPISPLSNSS (78 aa)) are disordered. The span at 661-675 (SPEDTKKPKASDESP) shows a compositional bias: basic and acidic residues. Polar residues-rich tracts occupy residues 687 to 696 (PSIQTTTGAS) and 708 to 717 (GESSQCSDMS). An SAM domain is found at 763–827 (WNVEDVYEFI…FARISMLKDS (65 aa)).

In terms of assembly, component of a PRC1-like complex. Isoform 1 expression is stronger at the posterior border than in the anterior region within individual somites; On the contrary, isoform 2 expression is higher at the posterior border.

It is found in the nucleus. Functionally, component of a Polycomb group (PcG) multiprotein PRC1-like complex, a complex class required to maintain the transcriptionally repressive state of many genes, including Hox genes, throughout development. PcG PRC1 complex acts via chromatin remodeling and modification of histones; it mediates monoubiquitination of histone H2A 'Lys-119', rendering chromatin heritably changed in its expressibility. The sequence is that of Polyhomeotic-like protein 2 (phc2) from Danio rerio (Zebrafish).